We begin with the raw amino-acid sequence, 202 residues long: Probable nicotinate-nucleotide adenylyltransferase (202 aa).

It belongs to the NadD family.

It catalyses the reaction nicotinate beta-D-ribonucleotide + ATP + H(+) = deamido-NAD(+) + diphosphate. Its pathway is cofactor biosynthesis; NAD(+) biosynthesis; deamido-NAD(+) from nicotinate D-ribonucleotide: step 1/1. Catalyzes the reversible adenylation of nicotinate mononucleotide (NaMN) to nicotinic acid adenine dinucleotide (NaAD). The chain is Probable nicotinate-nucleotide adenylyltransferase from Clostridium perfringens (strain 13 / Type A).